The following is a 47-amino-acid chain: Sperm protamine P1 (47 aa).

The protein belongs to the protamine P1 family. In terms of tissue distribution, testis.

It localises to the nucleus. The protein localises to the chromosome. In terms of biological role, protamines substitute for histones in the chromatin of sperm during the haploid phase of spermatogenesis. They compact sperm DNA into a highly condensed, stable and inactive complex. The protein is Sperm protamine P1 (PRM1) of Myotis daubentonii (Daubenton's bat).